A 427-amino-acid chain; its full sequence is 3-phosphoshikimate 1-carboxyvinyltransferase (427 aa).

Lysine 22, serine 23, and arginine 27 together coordinate 3-phosphoshikimate. Lysine 22 provides a ligand contact to phosphoenolpyruvate. Phosphoenolpyruvate-binding residues include glycine 93 and arginine 122. Positions 167, 169, 315, and 342 each coordinate 3-phosphoshikimate. Phosphoenolpyruvate is bound at residue glutamine 169. Residue aspartate 315 is the Proton acceptor of the active site. Positions 346 and 387 each coordinate phosphoenolpyruvate.

This sequence belongs to the EPSP synthase family. Monomer.

Its subcellular location is the cytoplasm. It carries out the reaction 3-phosphoshikimate + phosphoenolpyruvate = 5-O-(1-carboxyvinyl)-3-phosphoshikimate + phosphate. It participates in metabolic intermediate biosynthesis; chorismate biosynthesis; chorismate from D-erythrose 4-phosphate and phosphoenolpyruvate: step 6/7. Its function is as follows. Catalyzes the transfer of the enolpyruvyl moiety of phosphoenolpyruvate (PEP) to the 5-hydroxyl of shikimate-3-phosphate (S3P) to produce enolpyruvyl shikimate-3-phosphate and inorganic phosphate. The sequence is that of 3-phosphoshikimate 1-carboxyvinyltransferase from Thermus thermophilus (strain ATCC 27634 / DSM 579 / HB8).